The primary structure comprises 334 residues: Ketol-acid reductoisomerase (NADP(+)) (334 aa).

In terms of domain architecture, KARI N-terminal Rossmann spans 1-181 (MTTVYYDQDV…GATRAGVIET (181 aa)). NADP(+)-binding positions include 25–28 (YGSQ), arginine 48, serine 52, and 82–85 (DEIQ). The active site involves histidine 107. Glycine 133 provides a ligand contact to NADP(+). Residues 182-327 (TFKEETETDL…RELREMMPFI (146 aa)) enclose the KARI C-terminal knotted domain. Positions 190, 194, 226, and 230 each coordinate Mg(2+). Serine 251 is a substrate binding site.

It belongs to the ketol-acid reductoisomerase family. Mg(2+) is required as a cofactor.

The enzyme catalyses (2R)-2,3-dihydroxy-3-methylbutanoate + NADP(+) = (2S)-2-acetolactate + NADPH + H(+). It carries out the reaction (2R,3R)-2,3-dihydroxy-3-methylpentanoate + NADP(+) = (S)-2-ethyl-2-hydroxy-3-oxobutanoate + NADPH + H(+). The protein operates within amino-acid biosynthesis; L-isoleucine biosynthesis; L-isoleucine from 2-oxobutanoate: step 2/4. Its pathway is amino-acid biosynthesis; L-valine biosynthesis; L-valine from pyruvate: step 2/4. Its function is as follows. Involved in the biosynthesis of branched-chain amino acids (BCAA). Catalyzes an alkyl-migration followed by a ketol-acid reduction of (S)-2-acetolactate (S2AL) to yield (R)-2,3-dihydroxy-isovalerate. In the isomerase reaction, S2AL is rearranged via a Mg-dependent methyl migration to produce 3-hydroxy-3-methyl-2-ketobutyrate (HMKB). In the reductase reaction, this 2-ketoacid undergoes a metal-dependent reduction by NADPH to yield (R)-2,3-dihydroxy-isovalerate. This is Ketol-acid reductoisomerase (NADP(+)) from Staphylococcus aureus (strain MSSA476).